The chain runs to 387 residues: MDDRTREYLKGRFGDYYRRASPALPPDANLREWGHIPWTPGSGTTMLRHQSLYDLGDVDTFFADNAPRHAYFSAARYDDPGASTMSQKGWRSADLVFDLDADHLPGVDPDATSYPEMLAECKQALLRLLDFLEDDFSFDDLTVVFSGGRGYHVHVRDESVRELDSEARREVVDYVRAIDLDTEGLIRTVSERGTTKRVLRTEGGWGARVHEALIEYADDLREMDAEDARERLMELDGIGEGRAETILGAFDRNPTAVREGNVEAGGPGVRRLVSALAARVTATDTAPIDEPVTTDTRRLIRLPRTLHGGSGLVVTPIDRDDLDAFDPLRDAVPDRFVGREIRIETDVDRTVELNGERVRVEPGRNTVPEFAGVFLMARGEARKAPER.

Active-site residues include Asp98, Asp100, and Asp289.

It belongs to the eukaryotic-type primase small subunit family. Heterodimer of a small subunit (PriS) and a large subunit (PriL). Mg(2+) is required as a cofactor. It depends on Mn(2+) as a cofactor.

In terms of biological role, catalytic subunit of DNA primase, an RNA polymerase that catalyzes the synthesis of short RNA molecules used as primers for DNA polymerase during DNA replication. The small subunit contains the primase catalytic core and has DNA synthesis activity on its own. Binding to the large subunit stabilizes and modulates the activity, increasing the rate of DNA synthesis while decreasing the length of the DNA fragments, and conferring RNA synthesis capability. The DNA polymerase activity may enable DNA primase to also catalyze primer extension after primer synthesis. May also play a role in DNA repair. This is DNA primase small subunit PriS from Halorubrum lacusprofundi (strain ATCC 49239 / DSM 5036 / JCM 8891 / ACAM 34).